The chain runs to 275 residues: MANYTAADVKKLREITGSGMLDCKKALEETNGDFDKAVEVLRIKGAKDVGKRAERNATEGLIAVSGNTMVEINSETDFVAKNAEFKEFAQKVADAAAAVKANTPEELAAADLDGKTAADAIQELSAKIGEKLELRRAITLEGEKLSVYLHQRSADLPPAVGVLVAYTGEGEAAQAAAHAAAMQVAALKAQYLTREDVPAEVIEKERSIAEQITREEGKPEKAIPKIVEGRLNGFYKDVCLVEQASVADSKKTVKQVMDEAGVTLTGFARYEVGQH.

The segment at 76–79 (TDFV) is involved in Mg(2+) ion dislocation from EF-Tu.

Belongs to the EF-Ts family.

The protein resides in the cytoplasm. In terms of biological role, associates with the EF-Tu.GDP complex and induces the exchange of GDP to GTP. It remains bound to the aminoacyl-tRNA.EF-Tu.GTP complex up to the GTP hydrolysis stage on the ribosome. This chain is Elongation factor Ts, found in Corynebacterium diphtheriae (strain ATCC 700971 / NCTC 13129 / Biotype gravis).